A 257-amino-acid polypeptide reads, in one-letter code: 1-(5-phosphoribosyl)-5-[(5-phosphoribosylamino)methylideneamino] imidazole-4-carboxamide isomerase (257 aa).

Residue Asp-8 is the Proton acceptor of the active site. Asp-129 functions as the Proton donor in the catalytic mechanism.

This sequence belongs to the HisA/HisF family.

It localises to the cytoplasm. The enzyme catalyses 1-(5-phospho-beta-D-ribosyl)-5-[(5-phospho-beta-D-ribosylamino)methylideneamino]imidazole-4-carboxamide = 5-[(5-phospho-1-deoxy-D-ribulos-1-ylimino)methylamino]-1-(5-phospho-beta-D-ribosyl)imidazole-4-carboxamide. It functions in the pathway amino-acid biosynthesis; L-histidine biosynthesis; L-histidine from 5-phospho-alpha-D-ribose 1-diphosphate: step 4/9. The protein is 1-(5-phosphoribosyl)-5-[(5-phosphoribosylamino)methylideneamino] imidazole-4-carboxamide isomerase of Crocosphaera subtropica (strain ATCC 51142 / BH68) (Cyanothece sp. (strain ATCC 51142)).